The chain runs to 46 residues: Mu-segestritoxin-Sf1b (46 aa).

Intrachain disulfides connect C3-C19, C10-C22, C18-C42, and C24-C40. Positions R31 to W33 are keys region for toxin activity.

This sequence belongs to the neurotoxin 16 (SFI) family. Expressed by the venom gland.

It localises to the secreted. In terms of biological role, insecticidal toxin. Causes flaccid paralysis followed by death when injected into Heliothis virescens larvae. Does not induce any toxic effects when injected intravenously into adult mice at a dose of 1.25 mg/kg body weight. The chain is Mu-segestritoxin-Sf1b from Segestria florentina (Tube-web spider).